A 376-amino-acid chain; its full sequence is Mitochondrial distribution and morphology protein 34 (376 aa).

An SMP-LTD domain is found at 1 to 194 (MSFTFNWPRF…LPGIIHRLSQ (194 aa)). Disordered regions lie at residues 207–249 (SKHP…PKIV) and 286–376 (SVPP…LHPS). Residues 218 to 230 (EISEPGDYGEEGE) are compositionally biased toward acidic residues. A compositionally biased stretch (basic residues) spans 306–318 (VKAKRKRTYRLGG). Residues 350-362 (MDRYFRSYDDHSR) are compositionally biased toward basic and acidic residues.

The protein belongs to the MDM34 family. In terms of assembly, component of the ER-mitochondria encounter structure (ERMES) or MDM complex, composed of MMM1, MDM10, MDM12 and MDM34.

Its subcellular location is the mitochondrion outer membrane. Functionally, component of the ERMES/MDM complex, which serves as a molecular tether to connect the endoplasmic reticulum (ER) and mitochondria. Components of this complex are involved in the control of mitochondrial shape and protein biogenesis, and function in nonvesicular lipid trafficking between the ER and mitochondria. MDM34 is required for the interaction of the ER-resident membrane protein MMM1 and the outer mitochondrial membrane-resident beta-barrel protein MDM10. The protein is Mitochondrial distribution and morphology protein 34 of Laccaria bicolor (strain S238N-H82 / ATCC MYA-4686) (Bicoloured deceiver).